Here is a 233-residue protein sequence, read N- to C-terminus: Lipoprotein-releasing system ATP-binding protein LolD (233 aa).

In terms of domain architecture, ABC transporter spans 7–233 (IHCEKLSKTY…QLQSESERNH (227 aa)). 43–50 (GASGAGKS) is an ATP binding site.

The protein belongs to the ABC transporter superfamily. Lipoprotein translocase (TC 3.A.1.125) family. The complex is composed of two ATP-binding proteins (LolD) and two transmembrane proteins (LolC and LolE).

It localises to the cell inner membrane. Part of the ABC transporter complex LolCDE involved in the translocation of mature outer membrane-directed lipoproteins, from the inner membrane to the periplasmic chaperone, LolA. Responsible for the formation of the LolA-lipoprotein complex in an ATP-dependent manner. The polypeptide is Lipoprotein-releasing system ATP-binding protein LolD (Coxiella burnetii (strain RSA 493 / Nine Mile phase I)).